A 218-amino-acid chain; its full sequence is Hypoxanthine-guanine phosphoribosyltransferase (218 aa).

Lys69 contributes to the GMP binding site. N6-acetyllysine is present on Lys103. Lys115 is covalently cross-linked (Glycyl lysine isopeptide (Lys-Gly) (interchain with G-Cter in SUMO1); alternate). Lys115 is covalently cross-linked (Glycyl lysine isopeptide (Lys-Gly) (interchain with G-Cter in SUMO2); alternate). GMP contacts are provided by residues 134–142 (EDIIDTGKT), Lys166, 186–188 (KFV), and Asp194. The active-site Proton acceptor is Asp138. Thr142 carries the phosphothreonine modification. Mg(2+) is bound at residue Asp194.

This sequence belongs to the purine/pyrimidine phosphoribosyltransferase family. As to quaternary structure, homotetramer. The cofactor is Mg(2+).

The protein resides in the cytoplasm. The catalysed reaction is IMP + diphosphate = hypoxanthine + 5-phospho-alpha-D-ribose 1-diphosphate. It carries out the reaction GMP + diphosphate = guanine + 5-phospho-alpha-D-ribose 1-diphosphate. It functions in the pathway purine metabolism; IMP biosynthesis via salvage pathway; IMP from hypoxanthine: step 1/1. Converts guanine to guanosine monophosphate, and hypoxanthine to inosine monophosphate. Transfers the 5-phosphoribosyl group from 5-phosphoribosylpyrophosphate onto the purine. Plays a central role in the generation of purine nucleotides through the purine salvage pathway. The sequence is that of Hypoxanthine-guanine phosphoribosyltransferase (Hprt1) from Mus musculus (Mouse).